Consider the following 374-residue polypeptide: tRNA-specific 2-thiouridylase MnmA (374 aa).

ATP-binding positions include 12-19 (GMSGGVDS) and Met-38. The tract at residues 98–100 (NPD) is interaction with target base in tRNA. Cys-103 (nucleophile) is an active-site residue. A disulfide bridge connects residues Cys-103 and Cys-200. Gly-127 contacts ATP. Positions 150–152 (KDQ) are interaction with tRNA. The active-site Cysteine persulfide intermediate is Cys-200. Residues 311-312 (RY) form an interaction with tRNA region.

The protein belongs to the MnmA/TRMU family.

The protein resides in the cytoplasm. The catalysed reaction is S-sulfanyl-L-cysteinyl-[protein] + uridine(34) in tRNA + AH2 + ATP = 2-thiouridine(34) in tRNA + L-cysteinyl-[protein] + A + AMP + diphosphate + H(+). Its function is as follows. Catalyzes the 2-thiolation of uridine at the wobble position (U34) of tRNA, leading to the formation of s(2)U34. The polypeptide is tRNA-specific 2-thiouridylase MnmA (Lactiplantibacillus plantarum (strain ATCC BAA-793 / NCIMB 8826 / WCFS1) (Lactobacillus plantarum)).